The sequence spans 217 residues: Methylthioribulose-1-phosphate dehydratase (217 aa).

Zn(2+)-binding residues include His-106 and His-108.

The protein belongs to the aldolase class II family. MtnB subfamily. Zn(2+) serves as cofactor.

The catalysed reaction is 5-(methylsulfanyl)-D-ribulose 1-phosphate = 5-methylsulfanyl-2,3-dioxopentyl phosphate + H2O. It participates in amino-acid biosynthesis; L-methionine biosynthesis via salvage pathway; L-methionine from S-methyl-5-thio-alpha-D-ribose 1-phosphate: step 2/6. In terms of biological role, catalyzes the dehydration of methylthioribulose-1-phosphate (MTRu-1-P) into 2,3-diketo-5-methylthiopentyl-1-phosphate (DK-MTP-1-P). In Xanthomonas euvesicatoria pv. vesicatoria (strain 85-10) (Xanthomonas campestris pv. vesicatoria), this protein is Methylthioribulose-1-phosphate dehydratase.